We begin with the raw amino-acid sequence, 358 residues long: MGNVAGETRANVIPLHTNRSRVAARRRAGQRAESRQHPSLLSDPNDRASAEQIAAVVREIDEHRRAAGATTSSTEATPNDLAQLVAAVAGFLRQRLTGDYSVDEFGFDPHFNSAIVRPLLRFFFKSWFRVEVSGVENIPRDGAALVVANHAGVLPFDGLMLSVAVHDEHPAHRDLRLLAADMVFDLPVIGEAARKAGHTMACTTDAHRLLASGELTAVFPEGYKGLGKRFEDRYRLQRFGRGGFVSAALRTKAPIVPCSIIGSEEIYPMLTDVKLLARLFGLPYFPITPLFPLAGPVGLVPLPSKWRIAFGEPICTADYASTDADDPMVTFELTDQVRETIQQTLYRLLAGRRNIFFG.

The tract at residues 1-47 (MGNVAGETRANVIPLHTNRSRVAARRRAGQRAESRQHPSLLSDPNDR) is disordered. The segment covering 18 to 29 (NRSRVAARRRAG) has biased composition (basic residues).

To M.leprae ML2427.

This is an uncharacterized protein from Mycobacterium tuberculosis (strain CDC 1551 / Oshkosh).